The chain runs to 372 residues: Queuine tRNA-ribosyltransferase (372 aa).

The active-site Proton acceptor is the Asp89. Substrate-binding positions include 89–93 (DSGGF), Asp143, Gln185, and Gly212. The segment at 243-249 (GVGKPED) is RNA binding. Catalysis depends on Asp262, which acts as the Nucleophile. Residues 267–271 (TRNAR) are RNA binding; important for wobble base 34 recognition. Zn(2+) contacts are provided by Cys300, Cys302, Cys305, and His331.

It belongs to the queuine tRNA-ribosyltransferase family. As to quaternary structure, homodimer. Within each dimer, one monomer is responsible for RNA recognition and catalysis, while the other monomer binds to the replacement base PreQ1. It depends on Zn(2+) as a cofactor.

The enzyme catalyses 7-aminomethyl-7-carbaguanine + guanosine(34) in tRNA = 7-aminomethyl-7-carbaguanosine(34) in tRNA + guanine. It functions in the pathway tRNA modification; tRNA-queuosine biosynthesis. Catalyzes the base-exchange of a guanine (G) residue with the queuine precursor 7-aminomethyl-7-deazaguanine (PreQ1) at position 34 (anticodon wobble position) in tRNAs with GU(N) anticodons (tRNA-Asp, -Asn, -His and -Tyr). Catalysis occurs through a double-displacement mechanism. The nucleophile active site attacks the C1' of nucleotide 34 to detach the guanine base from the RNA, forming a covalent enzyme-RNA intermediate. The proton acceptor active site deprotonates the incoming PreQ1, allowing a nucleophilic attack on the C1' of the ribose to form the product. After dissociation, two additional enzymatic reactions on the tRNA convert PreQ1 to queuine (Q), resulting in the hypermodified nucleoside queuosine (7-(((4,5-cis-dihydroxy-2-cyclopenten-1-yl)amino)methyl)-7-deazaguanosine). The chain is Queuine tRNA-ribosyltransferase from Pseudomonas aeruginosa (strain LESB58).